Reading from the N-terminus, the 106-residue chain is Stress-responsive protein 1 (106 aa).

The protein localises to the mitochondrion. Its function is as follows. Stress-responsive protein that may play a role in regulation of cell cycle. This is Stress-responsive protein 1 (sro1) from Schizosaccharomyces pombe (strain 972 / ATCC 24843) (Fission yeast).